Here is a 274-residue protein sequence, read N- to C-terminus: Thiamine kinase (274 aa).

The protein belongs to the thiamine kinase family.

It carries out the reaction thiamine + ATP = thiamine phosphate + ADP + H(+). It participates in cofactor biosynthesis; thiamine diphosphate biosynthesis; thiamine phosphate from thiamine: step 1/1. Catalyzes the ATP-dependent phosphorylation of thiamine to thiamine phosphate. Is involved in thiamine salvage. This chain is Thiamine kinase, found in Salmonella dublin (strain CT_02021853).